The chain runs to 257 residues: NAD kinase (257 aa).

The Proton acceptor role is filled by aspartate 46. NAD(+) is bound by residues 46–47 (DG), histidine 51, 116–117 (NE), aspartate 146, alanine 154, 157–162 (TAYNLS), and glutamine 218.

Belongs to the NAD kinase family. It depends on a divalent metal cation as a cofactor.

The protein resides in the cytoplasm. It catalyses the reaction NAD(+) + ATP = ADP + NADP(+) + H(+). In terms of biological role, involved in the regulation of the intracellular balance of NAD and NADP, and is a key enzyme in the biosynthesis of NADP. Catalyzes specifically the phosphorylation on 2'-hydroxyl of the adenosine moiety of NAD to yield NADP. This chain is NAD kinase, found in Rhizobium meliloti (strain 1021) (Ensifer meliloti).